The following is a 241-amino-acid chain: Large ribosomal subunit protein uL3 (241 aa).

The interval 140 to 168 (SHRSIGSTGGRQDPGKTFKNKKMPGHMGD) is disordered. Gln-151 bears the N5-methylglutamine mark.

Belongs to the universal ribosomal protein uL3 family. In terms of assembly, part of the 50S ribosomal subunit. Forms a cluster with proteins L14 and L19. Methylated by PrmB.

In terms of biological role, one of the primary rRNA binding proteins, it binds directly near the 3'-end of the 23S rRNA, where it nucleates assembly of the 50S subunit. This chain is Large ribosomal subunit protein uL3, found in Azorhizobium caulinodans (strain ATCC 43989 / DSM 5975 / JCM 20966 / LMG 6465 / NBRC 14845 / NCIMB 13405 / ORS 571).